The chain runs to 462 residues: MEQAIKQLRNQQKQLDQQIEQQKQTLNSLISRREEVTKGIQTLELLSGTTLVPDQQIHEALQPAVSESTKGNQEIKTWKQIFDEEHELTREEKIDATVGQKKKAYVIFDGPWKGIYQDWHIVKSKVNAQPYRYKGYNSLEEAKLAHKQAYAEVTKADEVKVEKTMKSFAKNNVAEKIHGLHKSGPKELTEAEFYRNWKMITEWTEESANLGFYPDCSKQVKAVFFIGADPHLLSSFYQSGLISYIYLQEDEGQKGAISKATSQLPKELRRTCQQYQLSFAKTREFYLAIQSTYPVFDEEKMLVPAKHLVKLGISASSYPENKIVKTNFNFSLFINSVDKLYNYIRQYGTTIKGFKVLMKTQLCLAVCLIRDQAEESSKIMVMEFELDISTLTGIFSNLPKELKKATCEKMHRYKSHLCESCEINFPELSETMNVSNDEKRSTKSVSSDEINLSAENDGYQHS.

A disordered region spans residues 433 to 462 (NVSNDEKRSTKSVSSDEINLSAENDGYQHS). Polar residues predominate over residues 443–462 (KSVSSDEINLSAENDGYQHS).

Belongs to the caulimoviridae viroplasmin family.

The protein localises to the host cytoplasm. In terms of biological role, enhances the translation of downstream ORFs on polycistronic mRNAs derived from soybean chlorotic mottle virus. This chain is Transactivator/viroplasmin protein, found in Soybean chlorotic mottle virus.